The following is a 538-amino-acid chain: Phosphoenolpyruvate carboxykinase (ATP) (538 aa).

Residues arginine 64, tyrosine 205, and lysine 211 each coordinate substrate. Residues lysine 211, histidine 230, and 246–254 (GLSGTGKTT) contribute to the ATP site. Mn(2+)-binding residues include lysine 211 and histidine 230. Aspartate 267 is a binding site for Mn(2+). ATP is bound by residues glutamate 295, arginine 331, 447–448 (RI), and threonine 453. Arginine 331 lines the substrate pocket.

It belongs to the phosphoenolpyruvate carboxykinase (ATP) family. Monomer. Mn(2+) is required as a cofactor.

It localises to the cytoplasm. It catalyses the reaction oxaloacetate + ATP = phosphoenolpyruvate + ADP + CO2. It participates in carbohydrate biosynthesis; gluconeogenesis. Involved in the gluconeogenesis. Catalyzes the conversion of oxaloacetate (OAA) to phosphoenolpyruvate (PEP) through direct phosphoryl transfer between the nucleoside triphosphate and OAA. In Histophilus somni (strain 129Pt) (Haemophilus somnus), this protein is Phosphoenolpyruvate carboxykinase (ATP).